The sequence spans 284 residues: 2-dehydro-3-deoxyphosphooctonate aldolase (284 aa).

Belongs to the KdsA family.

The protein localises to the cytoplasm. It catalyses the reaction D-arabinose 5-phosphate + phosphoenolpyruvate + H2O = 3-deoxy-alpha-D-manno-2-octulosonate-8-phosphate + phosphate. It participates in carbohydrate biosynthesis; 3-deoxy-D-manno-octulosonate biosynthesis; 3-deoxy-D-manno-octulosonate from D-ribulose 5-phosphate: step 2/3. Its pathway is bacterial outer membrane biogenesis; lipopolysaccharide biosynthesis. The sequence is that of 2-dehydro-3-deoxyphosphooctonate aldolase from Vibrio vulnificus (strain CMCP6).